The following is a 231-amino-acid chain: 3-oxoadipate CoA-transferase subunit A (231 aa).

25 to 31 lines the CoA pocket; it reads GGFGTAG.

Belongs to the 3-oxoacid CoA-transferase subunit A family. As to quaternary structure, heterodimer.

The catalysed reaction is 3-oxoadipate + succinyl-CoA = 3-oxoadipyl-CoA + succinate. It participates in aromatic compound metabolism; beta-ketoadipate pathway; acetyl-CoA and succinyl-CoA from 3-oxoadipate: step 1/2. In Pseudomonas putida (Arthrobacter siderocapsulatus), this protein is 3-oxoadipate CoA-transferase subunit A (pcaI).